Consider the following 397-residue polypeptide: Elongation factor Tu (397 aa).

The region spanning 10–207 (LPHVNVGTIG…TLDAYIPEPV (198 aa)) is the tr-type G domain. A G1 region spans residues 19–26 (GHVDHGKT). 19-26 (GHVDHGKT) contributes to the GTP binding site. Thr-26 contacts Mg(2+). Residues 60–64 (GITIN) form a G2 region. The segment at 81 to 84 (DCPG) is G3. GTP-binding positions include 81–85 (DCPGH) and 136–139 (NKAD). Residues 136 to 139 (NKAD) are G4. Positions 174-176 (SAR) are G5.

It belongs to the TRAFAC class translation factor GTPase superfamily. Classic translation factor GTPase family. EF-Tu/EF-1A subfamily. As to quaternary structure, monomer.

It localises to the cytoplasm. It catalyses the reaction GTP + H2O = GDP + phosphate + H(+). GTP hydrolase that promotes the GTP-dependent binding of aminoacyl-tRNA to the A-site of ribosomes during protein biosynthesis. The polypeptide is Elongation factor Tu (Pseudomonas entomophila (strain L48)).